Consider the following 1612-residue polypeptide: Roundabout homolog 1 (1612 aa).

The signal sequence occupies residues 1–19 (MIAEPAHFYLFGLICLCSG). The Extracellular portion of the chain corresponds to 20–858 (SRLRQEDFPP…QQISDVVRQP (839 aa)). 5 consecutive Ig-like C2-type domains span residues 29-125 (PRIV…ASLE), 131-218 (DDFR…AELT), 223-307 (PSFV…ATLT), 312-407 (PHFV…LEVT), and 416-502 (PVIR…AYIE). An intrachain disulfide couples C50 to C108. The N-linked (GlcNAc...) asparagine glycan is linked to N121. Disulfide bonds link C152/C201, C244/C291, and C333/C389. N424 carries an N-linked (GlcNAc...) asparagine glycan. The cysteines at positions 437 and 486 are disulfide-linked. 3 consecutive Fibronectin type-III domains span residues 524–618 (APSK…TQDV), 637–734 (VVLH…TLEE), and 739–835 (PPRS…LDSH). N-linked (GlcNAc...) asparagine glycans are attached at residues N751, N781, and N788. The helical transmembrane segment at 859–879 (AFIAGIGAACWIILMVFSIWL) threads the bilayer. Topologically, residues 880–1612 (YRHRKKRNGL…NNEELEETES (733 aa)) are cytoplasmic. S901 carries the phosphoserine modification. T909 is subject to Phosphothreonine. At Y999 the chain carries Phosphotyrosine. S1016 carries the phosphoserine modification. Residue Y1034 is modified to Phosphotyrosine. The segment at 1045 to 1068 (SNNMNNGAGDSSEKHWKPPGQQKP) is disordered. At Y1075 the chain carries Phosphotyrosine. 3 disordered regions span residues 1088–1298 (RAND…ADME), 1313–1358 (EQTP…DGSF), and 1381–1612 (RRQM…ETES). Positions 1098–1107 (PYNQSYDQNT) are enriched in polar residues. Positions 1108-1124 (GGSYNSSDRGSSTSGSQ) are enriched in low complexity. Over residues 1147–1157 (LPPPPAHPPPH) the composition is skewed to pro residues. Residue T1201 is modified to Phosphothreonine. The span at 1216–1230 (YSHQSTATLTPSPQE) shows a compositional bias: polar residues. Residues 1242–1254 (DLGHMPHPPDRRR) show a composition bias toward basic and acidic residues. A compositionally biased stretch (pro residues) spans 1257-1268 (VSPPPPPRPISP). S1258 carries the phosphoserine modification. Acidic residues predominate over residues 1283–1297 (MDTDAPEEEEDEADM). The segment covering 1345-1358 (SSGRSSVSSSDGSF) has biased composition (low complexity). Polar residues predominate over residues 1399–1412 (PRPTSPVSTDSNMS). Residues 1420-1431 (RPAKKQKHQPGH) are compositionally biased toward basic residues. Positions 1441-1451 (LPPPPVPPPAI) are enriched in pro residues. Basic and acidic residues-rich tracts occupy residues 1477 to 1502 (ARTD…RQVT) and 1510 to 1534 (DPRE…RDLP). Positions 1553-1562 (FPTSNNPRDP) are enriched in polar residues. Low complexity predominate over residues 1563-1575 (SSSSSMSSRGSGS). A compositionally biased stretch (acidic residues) spans 1603–1612 (NNEELEETES).

Belongs to the immunoglobulin superfamily. ROBO family. In terms of assembly, homodimer. Dimerization is mediated by the extracellular domain and is independent of SLIT liganding. Interacts with SLIT1 Interacts with SLIT2. Interacts with FLRT3. Interacts with MYO9B (via Rho-GAP domain). Post-translationally, ubiquitinated. May be deubiquitinated by USP33. As to expression, detected in embryonic thalamus neurons (at protein level). Expressed in embryonal spinal cord. Expressed in embryonal lung, and in adult lung bronchial epithelial cells of large proximal airways.

The protein localises to the cell membrane. It is found in the cell projection. It localises to the axon. The protein resides in the endoplasmic reticulum-Golgi intermediate compartment membrane. In terms of biological role, receptor for SLIT1 and SLIT2 that mediates cellular responses to molecular guidance cues in cellular migration, including axonal navigation at the ventral midline of the neural tube and projection of axons to different regions during neuronal development. Interaction with the intracellular domain of FLRT3 mediates axon attraction towards cells expressing NTN1. In axon growth cones, the silencing of the attractive effect of NTN1 by SLIT2 may require the formation of a ROBO1-DCC complex. Plays a role in the regulation of cell migration via its interaction with MYO9B; inhibits MYO9B-mediated stimulation of RHOA GTPase activity, and thereby leads to increased levels of active, GTP-bound RHOA. May be required for lung development. The polypeptide is Roundabout homolog 1 (Robo1) (Mus musculus (Mouse)).